Consider the following 305-residue polypeptide: tRNA dimethylallyltransferase (305 aa).

8–15 (GPTAVGKT) provides a ligand contact to ATP. Residue 10–15 (TAVGKT) coordinates substrate. The segment at 33 to 36 (DSRQ) is interaction with substrate tRNA.

This sequence belongs to the IPP transferase family. As to quaternary structure, monomer. The cofactor is Mg(2+).

The enzyme catalyses adenosine(37) in tRNA + dimethylallyl diphosphate = N(6)-dimethylallyladenosine(37) in tRNA + diphosphate. Its function is as follows. Catalyzes the transfer of a dimethylallyl group onto the adenine at position 37 in tRNAs that read codons beginning with uridine, leading to the formation of N6-(dimethylallyl)adenosine (i(6)A). The polypeptide is tRNA dimethylallyltransferase (Thermotoga maritima (strain ATCC 43589 / DSM 3109 / JCM 10099 / NBRC 100826 / MSB8)).